The primary structure comprises 527 residues: NAD(P)H-quinone oxidoreductase chain 4 1 (527 aa).

Helical transmembrane passes span 5–25 (FPWL…LPII), 35–55 (WYSL…FCTG), 90–110 (LIIL…PVSF), 112–132 (PKLF…VFAV), 136–156 (LLFF…LSIW), 168–188 (FILY…TMAF), 211–231 (LLLY…FPLH), 242–262 (TAPA…YALL), 274–294 (AVFA…AALT), 310–330 (ISHM…GLSG), 331–351 (AVLQ…LVGA), 386–406 (LALP…GFAT), 416–436 (VLVI…LLSM), and 463–483 (VFII…PKIV).

It belongs to the complex I subunit 4 family.

Its subcellular location is the cellular thylakoid membrane. It catalyses the reaction a plastoquinone + NADH + (n+1) H(+)(in) = a plastoquinol + NAD(+) + n H(+)(out). The catalysed reaction is a plastoquinone + NADPH + (n+1) H(+)(in) = a plastoquinol + NADP(+) + n H(+)(out). NDH-1 shuttles electrons from NAD(P)H, via FMN and iron-sulfur (Fe-S) centers, to quinones in the respiratory chain. The immediate electron acceptor for the enzyme in this species is believed to be plastoquinone. Couples the redox reaction to proton translocation (for every two electrons transferred, four hydrogen ions are translocated across the cytoplasmic membrane), and thus conserves the redox energy in a proton gradient. The polypeptide is NAD(P)H-quinone oxidoreductase chain 4 1 (Trichodesmium erythraeum (strain IMS101)).